A 348-amino-acid polypeptide reads, in one-letter code: Elongation factor Ts (348 aa).

Residues 80 to 83 are involved in Mg(2+) ion dislocation from EF-Tu; that stretch reads TDFV.

This sequence belongs to the EF-Ts family.

The protein localises to the cytoplasm. In terms of biological role, associates with the EF-Tu.GDP complex and induces the exchange of GDP to GTP. It remains bound to the aminoacyl-tRNA.EF-Tu.GTP complex up to the GTP hydrolysis stage on the ribosome. The protein is Elongation factor Ts of Streptococcus mutans serotype c (strain ATCC 700610 / UA159).